A 161-amino-acid polypeptide reads, in one-letter code: Probable cell wall elongation regulator TseB (161 aa).

The Cytoplasmic portion of the chain corresponds to 1–5 (MRKKA). The chain crosses the membrane as a helical span at residues 6–26 (LIFTVIFGIIFLAVLLVSASI). Over 27-161 (YKSAMAQKEE…TGKILKNITP (135 aa)) the chain is Extracellular.

Interacts with the penicillin-binding protein PBP2A, a monofunctional transpeptidase.

The protein resides in the cell membrane. Its function is as follows. Required for normal cell shape. Plays an important role in cell wall elongation during exponential phase and spore outgrowth. Probably regulates the activity of the penicillin-binding protein PBP2A through a direct interaction. Not required for PBP2A activity, stability and localization. The protein is Probable cell wall elongation regulator TseB of Bacillus subtilis (strain 168).